The following is a 397-amino-acid chain: MQNYLTPNFAFAPMIPERASGSRVWDTEGREYIDFSGGIAVNALGHCHPALVDALNAQMHKLWHISNIYTTRPAQELAQKLVANSFADKVFFCNSGSEANEAALKLARKYARDRFGGGKSEIVACINSFHGRTLFTVSVGGQPKYSKDYAPLPQGITHVPFNDIAALEAAVGEQTCAVIIEPIQGESGILPATAEYLQTARRLCDRHNALLILDEVQTGMGHTGRLFAYEHYGVVPDILSSAKALGCGFPIGAMLATETIAAAFQPGTHGSTFGGNPMACAVGSRAFDIINAPETLHNVRSQGQKLQTALLDLGRKTGLFSQVRGMGLLLGCVLDAPYRGRASEITAAALKHGVMILVAGADVLRFAPSLLLNDEDTAEGLRRLEHVLTEFAAANRP.

Phe129 provides a ligand contact to pyridoxal 5'-phosphate. A N(2)-acetyl-L-ornithine-binding site is contributed by Arg132. Position 214 to 217 (214 to 217 (DEVQ)) interacts with pyridoxal 5'-phosphate. Position 243 is an N6-(pyridoxal phosphate)lysine (Lys243). Residue Ser271 coordinates N(2)-acetyl-L-ornithine. Thr272 serves as a coordination point for pyridoxal 5'-phosphate.

The protein belongs to the class-III pyridoxal-phosphate-dependent aminotransferase family. ArgD subfamily. In terms of assembly, homodimer. Requires pyridoxal 5'-phosphate as cofactor.

The protein resides in the cytoplasm. The catalysed reaction is N(2)-acetyl-L-ornithine + 2-oxoglutarate = N-acetyl-L-glutamate 5-semialdehyde + L-glutamate. It participates in amino-acid biosynthesis; L-arginine biosynthesis; N(2)-acetyl-L-ornithine from L-glutamate: step 4/4. The polypeptide is Acetylornithine aminotransferase (Neisseria meningitidis serogroup A / serotype 4A (strain DSM 15465 / Z2491)).